Reading from the N-terminus, the 142-residue chain is Small ribosomal subunit protein uS12 (142 aa).

The tract at residues 1-30 (MGKTRGMGAARKLKNHRRRQRWADKSYKKS) is disordered. A compositionally biased stretch (basic residues) spans 11–20 (RKLKNHRRRQ). Over residues 21–30 (RWADKSYKKS) the composition is skewed to basic and acidic residues. P61 is subject to Hydroxyproline.

Belongs to the universal ribosomal protein uS12 family.

In Fragaria ananassa (Strawberry), this protein is Small ribosomal subunit protein uS12 (RPS23).